Reading from the N-terminus, the 110-residue chain is Large ribosomal subunit protein P1 (110 aa).

The tract at residues 87-110 (PAAEEKKEEEKEESDEDMGFGLFD) is disordered.

The protein belongs to the eukaryotic ribosomal protein P1/P2 family. P1 and P2 exist as dimers at the large ribosomal subunit. Post-translationally, phosphorylated.

Plays an important role in the elongation step of protein synthesis. The chain is Large ribosomal subunit protein P1 (ALTA12) from Alternaria alternata (Alternaria rot fungus).